The chain runs to 404 residues: S-adenosylmethionine synthase (404 aa).

An ATP-binding site is contributed by His18. Mg(2+) is bound at residue Asp20. Glu46 serves as a coordination point for K(+). The L-methionine site is built by Glu59 and Gln102. The tract at residues 102–112 (QSPDIAQGVDT) is flexible loop. ATP is bound by residues 177 to 179 (DGK), 249 to 250 (KF), Asp258, 264 to 265 (RK), Ala281, and Lys285. L-methionine is bound at residue Asp258. Lys289 provides a ligand contact to L-methionine.

It belongs to the AdoMet synthase family. In terms of assembly, homotetramer; dimer of dimers. The cofactor is Mg(2+). K(+) is required as a cofactor.

The protein resides in the cytoplasm. The enzyme catalyses L-methionine + ATP + H2O = S-adenosyl-L-methionine + phosphate + diphosphate. It participates in amino-acid biosynthesis; S-adenosyl-L-methionine biosynthesis; S-adenosyl-L-methionine from L-methionine: step 1/1. In terms of biological role, catalyzes the formation of S-adenosylmethionine (AdoMet) from methionine and ATP. The overall synthetic reaction is composed of two sequential steps, AdoMet formation and the subsequent tripolyphosphate hydrolysis which occurs prior to release of AdoMet from the enzyme. In Nocardia farcinica (strain IFM 10152), this protein is S-adenosylmethionine synthase.